The sequence spans 438 residues: Glutamate-1-semialdehyde 2,1-aminomutase (438 aa).

K274 carries the post-translational modification N6-(pyridoxal phosphate)lysine.

This sequence belongs to the class-III pyridoxal-phosphate-dependent aminotransferase family. HemL subfamily. Homodimer. Pyridoxal 5'-phosphate is required as a cofactor.

It is found in the cytoplasm. It catalyses the reaction (S)-4-amino-5-oxopentanoate = 5-aminolevulinate. Its pathway is porphyrin-containing compound metabolism; protoporphyrin-IX biosynthesis; 5-aminolevulinate from L-glutamyl-tRNA(Glu): step 2/2. This is Glutamate-1-semialdehyde 2,1-aminomutase from Salinibacter ruber (strain DSM 13855 / M31).